The primary structure comprises 322 residues: Prephenate dehydratase (322 aa).

The 187-residue stretch at 5–191 (RIAYLGPEGT…ARTRFVLVGM (187 aa)) folds into the Prephenate dehydratase domain. An ACT domain is found at 205-282 (SAVLRIDNAP…ADVCYLGSWP (78 aa)). The tract at residues 286–322 (ATGPTVSPPPPDEASRWLARLRAGKPDQASEPGGGKL) is disordered.

As to quaternary structure, homodimer.

It catalyses the reaction prephenate + H(+) = 3-phenylpyruvate + CO2 + H2O. The protein operates within amino-acid biosynthesis; L-phenylalanine biosynthesis; phenylpyruvate from prephenate: step 1/1. This Mycobacterium leprae (strain Br4923) protein is Prephenate dehydratase (pheA).